The sequence spans 154 residues: Myoglobin (154 aa).

The Globin domain maps to 2-148 (GLSDGEWQLV…FRNDIAAKYK (147 aa)). Residue Ser-4 is modified to Phosphoserine. His-65 contributes to the nitrite binding site. His-65 provides a ligand contact to O2. At Thr-68 the chain carries Phosphothreonine. Residue His-94 participates in heme b binding.

As to quaternary structure, monomer.

It is found in the cytoplasm. The protein localises to the sarcoplasm. It catalyses the reaction Fe(III)-heme b-[protein] + nitric oxide + H2O = Fe(II)-heme b-[protein] + nitrite + 2 H(+). The enzyme catalyses H2O2 + AH2 = A + 2 H2O. Functionally, monomeric heme protein which primary function is to store oxygen and facilitate its diffusion within muscle tissues. Reversibly binds oxygen through a pentacoordinated heme iron and enables its timely and efficient release as needed during periods of heightened demand. Depending on the oxidative conditions of tissues and cells, and in addition to its ability to bind oxygen, it also has a nitrite reductase activity whereby it regulates the production of bioactive nitric oxide. Under stress conditions, like hypoxia and anoxia, it also protects cells against reactive oxygen species thanks to its pseudoperoxidase activity. The polypeptide is Myoglobin (Hystrix cristata (North African crested porcupine)).